Reading from the N-terminus, the 321-residue chain is MLPLPLSILLLLTQSQSFLGEEMDVYSEKTLTDPCTLVVCAPPADSLRGHDGRDGKEGPQGEKGDPGPPGMPGPAGREGPSGRQGSMGPPGTPGPKGEPGPEGGVGAPGMPGSPGPAGLKGERGTPGPGGAIGPQGPSGAMGPPGLKGDRGDPGEKGARGETSVLEVDTLRQRMRNLEGEVQRLQNIVTQYRKAVLFPDGQAVGEKIFKTAGAVKSYSDAEQLCREAKGQLASPRSSAENEAVTQLVRAKNKHAYLSMNDISKEGKFTYPTGGSLDYSNWAPGEPNNRAKDEGPENCLEIYSDGNWNDIECREERLVICEF.

The N-terminal stretch at 1 to 20 (MLPLPLSILLLLTQSQSFLG) is a signal peptide. The tract at residues 43–163 (PADSLRGHDG…GEKGARGETS (121 aa)) is disordered. A compositionally biased stretch (basic and acidic residues) spans 47 to 65 (LRGHDGRDGKEGPQGEKGD). Residues 49 to 162 (GHDGRDGKEG…PGEKGARGET (114 aa)) enclose the Collagen-like domain. Gly residues-rich tracts occupy residues 100–109 (GPEGGVGAPG) and 124–133 (GTPGPGGAIG). Over residues 147–159 (KGDRGDPGEKGAR) the composition is skewed to basic and acidic residues. The C-type lectin domain maps to 222–321 (QLCREAKGQL…REERLVICEF (100 aa)). Intrachain disulfides connect cysteine 224–cysteine 319 and cysteine 297–cysteine 311.

The protein belongs to the SFTPD family. As to quaternary structure, oligomeric complex of 4 set of homotrimers. In terms of processing, hydroxylated. Liver specific.

Its subcellular location is the secreted. Lectin that binds to various sugars: mannose = ManNAc &gt; fucose &gt; GlcNAc &gt; glucose = maltose &gt; galactose &gt; lactose &gt; GalNAc. Could play a role in immune defense. This Bos taurus (Bovine) protein is Collectin-43 (CL43).